A 482-amino-acid polypeptide reads, in one-letter code: NADH-quinone oxidoreductase subunit N (482 aa).

Helical transmembrane passes span 10 to 30 (ALGPALPELILTVGALVLILY), 44 to 64 (VGAIIVLIVALFSVVSQPLGA), 77 to 97 (GFARVMKTLTLVGSLAALLLA), 113 to 133 (ILIVLSSIGMLIMASANDLIG), 166 to 186 (FVLGALSSGMLLYGASLVYGF), 206 to 226 (LGLVLGIVFVAAGVAFKLAAV), 243 to 265 (VTAFFASAPKMAAMAMTVRVFIG), 277 to 296 (IIVFIAIASMALGSFAAIGQ), 302 to 322 (LMAYSSIGNVGYALIGLAAGT), 328 to 348 (GVVVYMAIYLAMTLGAFAVIL), 374 to 394 (AFCLAMMMFSLAGIPPLAGFF), 397 to 417 (FYVFAAAIKAGLNVLAVIGVV), and 451 to 471 (IVLAASSVVVVLFWIVPAPLV).

This sequence belongs to the complex I subunit 2 family. NDH-1 is composed of 14 different subunits. Subunits NuoA, H, J, K, L, M, N constitute the membrane sector of the complex.

It localises to the cell inner membrane. The catalysed reaction is a quinone + NADH + 5 H(+)(in) = a quinol + NAD(+) + 4 H(+)(out). NDH-1 shuttles electrons from NADH, via FMN and iron-sulfur (Fe-S) centers, to quinones in the respiratory chain. The immediate electron acceptor for the enzyme in this species is believed to be ubiquinone. Couples the redox reaction to proton translocation (for every two electrons transferred, four hydrogen ions are translocated across the cytoplasmic membrane), and thus conserves the redox energy in a proton gradient. The chain is NADH-quinone oxidoreductase subunit N from Methylobacterium nodulans (strain LMG 21967 / CNCM I-2342 / ORS 2060).